Here is a 204-residue protein sequence, read N- to C-terminus: Fluoride-specific ion channel FluC 3 (204 aa).

The segment covering 1–16 (MRADESGPERESREPT) has biased composition (basic and acidic residues). The disordered stretch occupies residues 1-53 (MRADESGPERESREPTHIPGAEPELGGEPTPRGEPGPGFEPGPGGEPAPSRAP). Positions 32 to 46 (RGEPGPGFEPGPGGE) are enriched in pro residues. The next 4 helical transmembrane spans lie at 62-82 (VLAA…ALGL), 96-116 (FAVN…VLEI), 125-145 (PFAA…MVDT), and 158-178 (AFNV…GLAI). The Na(+) site is built by Gly133 and Thr136.

The protein belongs to the fluoride channel Fluc/FEX (TC 1.A.43) family.

It localises to the cell membrane. The catalysed reaction is fluoride(in) = fluoride(out). With respect to regulation, na(+) is not transported, but it plays an essential structural role and its presence is essential for fluoride channel function. Its function is as follows. Fluoride-specific ion channel. Important for reducing fluoride concentration in the cell, thus reducing its toxicity. This is Fluoride-specific ion channel FluC 3 from Streptomyces avermitilis (strain ATCC 31267 / DSM 46492 / JCM 5070 / NBRC 14893 / NCIMB 12804 / NRRL 8165 / MA-4680).